The sequence spans 479 residues: Membrane-bound lytic murein transglycosylase F (479 aa).

The first 15 residues, 1-15, serve as a signal peptide directing secretion; sequence MKRLLLVLCYITLLA. Residues 16 to 258 form a non-LT domain region; the sequence is GCQKVVVEQE…HLNEKYFAHV (243 aa). The LT domain stretch occupies residues 260–479; it reads RFDYVDTRAF…QTDAIQPQQP (220 aa). Residue E303 is part of the active site. The interval 457–479 is disordered; it reads LQTAEAKETEEKPQTDAIQPQQP. A compositionally biased stretch (basic and acidic residues) spans 461 to 470; the sequence is EAKETEEKPQ.

In the N-terminal section; belongs to the bacterial solute-binding protein 3 family. It in the C-terminal section; belongs to the transglycosylase Slt family.

Its subcellular location is the cell outer membrane. The catalysed reaction is Exolytic cleavage of the (1-&gt;4)-beta-glycosidic linkage between N-acetylmuramic acid (MurNAc) and N-acetylglucosamine (GlcNAc) residues in peptidoglycan, from either the reducing or the non-reducing ends of the peptidoglycan chains, with concomitant formation of a 1,6-anhydrobond in the MurNAc residue.. Murein-degrading enzyme that degrades murein glycan strands and insoluble, high-molecular weight murein sacculi, with the concomitant formation of a 1,6-anhydromuramoyl product. Lytic transglycosylases (LTs) play an integral role in the metabolism of the peptidoglycan (PG) sacculus. Their lytic action creates space within the PG sacculus to allow for its expansion as well as for the insertion of various structures such as secretion systems and flagella. The sequence is that of Membrane-bound lytic murein transglycosylase F from Shewanella pealeana (strain ATCC 700345 / ANG-SQ1).